A 458-amino-acid polypeptide reads, in one-letter code: Bifunctional protein GlmU (458 aa).

Positions 1-230 are pyrophosphorylase; sequence MSLPTYSKLN…EWQVAGINSK (230 aa). UDP-N-acetyl-alpha-D-glucosamine is bound by residues 14–17, Lys28, Gln79, and 84–85; these read LAAG and GT. Residue Asp108 participates in Mg(2+) binding. Positions 141, 155, 170, and 228 each coordinate UDP-N-acetyl-alpha-D-glucosamine. Asn228 serves as a coordination point for Mg(2+). A linker region spans residues 231–251; it reads QDLAALERVYQGRYAARLLAK. The N-acetyltransferase stretch occupies residues 252–458; it reads GVTLADPSRI…NWKRPEKVKK (207 aa). 2 residues coordinate UDP-N-acetyl-alpha-D-glucosamine: Arg334 and Lys352. Residue His364 is the Proton acceptor of the active site. The UDP-N-acetyl-alpha-D-glucosamine site is built by Tyr367 and Asn378. Acetyl-CoA is bound by residues Ala381, 387 to 388, Ser406, Ala424, and Arg441; that span reads NY.

It in the N-terminal section; belongs to the N-acetylglucosamine-1-phosphate uridyltransferase family. The protein in the C-terminal section; belongs to the transferase hexapeptide repeat family. Homotrimer. The cofactor is Mg(2+).

It is found in the cytoplasm. The enzyme catalyses alpha-D-glucosamine 1-phosphate + acetyl-CoA = N-acetyl-alpha-D-glucosamine 1-phosphate + CoA + H(+). The catalysed reaction is N-acetyl-alpha-D-glucosamine 1-phosphate + UTP + H(+) = UDP-N-acetyl-alpha-D-glucosamine + diphosphate. It functions in the pathway nucleotide-sugar biosynthesis; UDP-N-acetyl-alpha-D-glucosamine biosynthesis; N-acetyl-alpha-D-glucosamine 1-phosphate from alpha-D-glucosamine 6-phosphate (route II): step 2/2. Its pathway is nucleotide-sugar biosynthesis; UDP-N-acetyl-alpha-D-glucosamine biosynthesis; UDP-N-acetyl-alpha-D-glucosamine from N-acetyl-alpha-D-glucosamine 1-phosphate: step 1/1. The protein operates within bacterial outer membrane biogenesis; LPS lipid A biosynthesis. Its function is as follows. Catalyzes the last two sequential reactions in the de novo biosynthetic pathway for UDP-N-acetylglucosamine (UDP-GlcNAc). The C-terminal domain catalyzes the transfer of acetyl group from acetyl coenzyme A to glucosamine-1-phosphate (GlcN-1-P) to produce N-acetylglucosamine-1-phosphate (GlcNAc-1-P), which is converted into UDP-GlcNAc by the transfer of uridine 5-monophosphate (from uridine 5-triphosphate), a reaction catalyzed by the N-terminal domain. The protein is Bifunctional protein GlmU of Methylobacillus flagellatus (strain ATCC 51484 / DSM 6875 / VKM B-1610 / KT).